The primary structure comprises 228 residues: MWCNPIICALDTYDINHALRLTKMLYGKISMVKLGLEFFTAHGLSGVQAVSDCGIPIFLDLKLHDIPNTVGKAISVIKSLNIAMLTIHISGGRDMMLSAIDSIFGSMIKLIGVTVLTSIDDSDLKDIGIDRSSIQHVMLLSKVAQEIGLYGIVCSAFEVQEVRNQCGKDFKLVVPGIRFEDDYSDQKRVKNPKDAILAGADYLVIGRPITMSSDPIQTVDAILSSINL.

Substrate is bound by residues Asp11, Lys33, 60–69 (DLKLHDIPNT), Thr117, Arg178, Gln186, Gly206, and Arg207. Lys62 acts as the Proton donor in catalysis.

It belongs to the OMP decarboxylase family. Type 1 subfamily. Homodimer.

The catalysed reaction is orotidine 5'-phosphate + H(+) = UMP + CO2. The protein operates within pyrimidine metabolism; UMP biosynthesis via de novo pathway; UMP from orotate: step 2/2. Functionally, catalyzes the decarboxylation of orotidine 5'-monophosphate (OMP) to uridine 5'-monophosphate (UMP). This Ehrlichia canis (strain Jake) protein is Orotidine 5'-phosphate decarboxylase.